The chain runs to 465 residues: Hepatocyte nuclear factor 6 (465 aa).

2 disordered regions span residues 15-84 (GVSH…GPLH) and 119-141 (SDKF…HQRL). Over residues 123-140 (PHHHHHHHHHHHPHHHQR) the composition is skewed to basic residues. The segment at residues 283–369 (GSNSGQMEEI…QRMSALRLAA (87 aa)) is a DNA-binding region (CUT). Positions 385-444 (PKKPRLVFTDVQRRTLHAIFKENKRPSKELQITISQQLGLELSTVSNFFMNARRRSLDKW) form a DNA-binding region, homeobox. The interval 442 to 465 (DKWQDEGSSNSGNSSSSSSTCTKA) is disordered. Low complexity predominate over residues 448–465 (GSSNSGNSSSSSSTCTKA).

This sequence belongs to the CUT homeobox family. Binds DNA as a monomer. Expressed in liver, brain, spleen and testis.

Its subcellular location is the nucleus. Its function is as follows. Transcriptional activator. Binds the consensus sequence 5'-DHWATTGAYTWWD-3' on a variety of gene promoters such as those of HNF3B and TTR. Important for liver genes transcription. The affinity of HNF-6-alpha and HNF-6-beta for DNA differs depending on the target sequence. This Rattus norvegicus (Rat) protein is Hepatocyte nuclear factor 6 (Onecut1).